The chain runs to 305 residues: UDP-3-O-acyl-N-acetylglucosamine deacetylase (305 aa).

Positions 79, 238, and 242 each coordinate Zn(2+). H265 serves as the catalytic Proton donor.

Belongs to the LpxC family. Zn(2+) serves as cofactor.

The catalysed reaction is a UDP-3-O-[(3R)-3-hydroxyacyl]-N-acetyl-alpha-D-glucosamine + H2O = a UDP-3-O-[(3R)-3-hydroxyacyl]-alpha-D-glucosamine + acetate. Its pathway is glycolipid biosynthesis; lipid IV(A) biosynthesis; lipid IV(A) from (3R)-3-hydroxytetradecanoyl-[acyl-carrier-protein] and UDP-N-acetyl-alpha-D-glucosamine: step 2/6. Catalyzes the hydrolysis of UDP-3-O-myristoyl-N-acetylglucosamine to form UDP-3-O-myristoylglucosamine and acetate, the committed step in lipid A biosynthesis. This Sodalis glossinidius (strain morsitans) protein is UDP-3-O-acyl-N-acetylglucosamine deacetylase.